Consider the following 592-residue polypeptide: Protein kinase C zeta type (592 aa).

The 84-residue stretch at 15 to 98 folds into the PB1 domain; it reads RVRLKAHYGG…EGLIIHVFPS (84 aa). Residues 79–145 are interaction with SQSTM1; the sequence is AFRLARQCRD…KRFNRRAYCG (67 aa). Residues 130–180 form a Phorbol-ester/DAG-type zinc finger; it reads GHLFQAKRFNRRAYCGQCSERIWGLARQGYRCINCKLLVHKRCHGLVPLTC. Residues 252–518 form the Protein kinase domain; it reads FDLIRVIGRG…FSDIKSHAFF (267 aa). ATP contacts are provided by residues 258 to 266 and K281; that span reads IGRGSYAKV. D376 acts as the Proton acceptor in catalysis. T410 carries the post-translational modification Phosphothreonine; by PDPK1 and PI3K. One can recognise an AGC-kinase C-terminal domain in the interval 519 to 590; sequence RSIDWDLLEK…INPLLLSTEE (72 aa). T560 is subject to Phosphothreonine. At S591 the chain carries Phosphoserine.

The protein belongs to the protein kinase superfamily. AGC Ser/Thr protein kinase family. PKC subfamily. As to quaternary structure, forms a ternary complex with SQSTM1 and KCNAB2. Forms another ternary complex with SQSTM1 and GABRR3. Forms a complex with SQSTM1 and MAP2K5. Interacts with PARD6A, PARD6B, PARD6G and SQSTM1. Part of a complex with PARD3, PARD6A or PARD6B or PARD6G and CDC42 or RAC1. Interacts with ADAP1/CENTA1. Forms a ternary complex composed of SQSTM1 and PAWR. Interacts directly with SQSTM1. Interacts with IKBKB. Interacts (via the protein kinase domain) with WWC1. Forms a tripartite complex with WWC1 and DDR1, but predominantly in the absence of collagen. Component of the Par polarity complex, composed of at least phosphorylated PRKCZ, PARD3 and TIAM1. Interacts with PDPK1 (via N-terminal region). Interacts with WDFY2 (via WD repeats 1-3). Interacts with VAMP2. Forms a complex with WDFY2 and VAMP2. Interacts with APPL1. Interacts with WWC1, WWC2 and WWC3. Post-translationally, CDH5 is required for its phosphorylation at Thr-410. Phosphorylated by protein kinase PDPK1; phosphorylation is inhibited by the apoptotic C-terminal cleavage product of PKN2. Phosphorylation at Thr-410 by PI3K activates the kinase. As to expression, expressed in brain, and to a lesser extent in lung, kidney and testis.

The protein localises to the cytoplasm. It is found in the endosome. Its subcellular location is the cell junction. It localises to the membrane. It catalyses the reaction L-seryl-[protein] + ATP = O-phospho-L-seryl-[protein] + ADP + H(+). The catalysed reaction is L-threonyl-[protein] + ATP = O-phospho-L-threonyl-[protein] + ADP + H(+). With respect to regulation, atypical PKCs (PRKCI and PRKCZ) exhibit an elevated basal enzymatic activity (that may be due to the interaction with SMG1 or SQSTM1) and are not regulated by diacylglycerol, phosphatidylserine, phorbol esters or calcium ions. Two specific sites, Thr-410 (activation loop of the kinase domain) and Thr-560 (turn motif), need to be phosphorylated for its full activation. Phosphatidylinositol 3,4,5-trisphosphate might be a physiological activator. Isoform 2: Constitutively active. Calcium- and diacylglycerol-independent serine/threonine-protein kinase that functions in phosphatidylinositol 3-kinase (PI3K) pathway and mitogen-activated protein (MAP) kinase cascade, and is involved in NF-kappa-B activation, mitogenic signaling, cell proliferation, cell polarity, inflammatory response and maintenance of long-term potentiation (LTP). Upon lipopolysaccharide (LPS) treatment in macrophages, or following mitogenic stimuli, functions downstream of PI3K to activate MAP2K1/MEK1-MAPK1/ERK2 signaling cascade independently of RAF1 activation. Required for insulin-dependent activation of AKT3, but may function as an adapter rather than a direct activator. Upon insulin treatment may act as a downstream effector of PI3K and contribute to the activation of translocation of the glucose transporter SLC2A4/GLUT4 and subsequent glucose transport in adipocytes. In EGF-induced cells, binds and activates MAP2K5/MEK5-MAPK7/ERK5 independently of its kinase activity and can activate JUN promoter through MEF2C. Through binding with SQSTM1/p62, functions in interleukin-1 signaling and activation of NF-kappa-B with the specific adapters RIPK1 and TRAF6. Participates in TNF-dependent transactivation of NF-kappa-B by phosphorylating and activating IKBKB kinase, which in turn leads to the degradation of NF-kappa-B inhibitors. In migrating astrocytes, forms a cytoplasmic complex with PARD6A and is recruited by CDC42 to function in the establishment of cell polarity along with the microtubule motor and dynein. In association with FEZ1, stimulates neuronal differentiation in PC12 cells. In the inflammatory response, is required for the T-helper 2 (Th2) differentiation process, including interleukin production, efficient activation of JAK1 and the subsequent phosphorylation and nuclear translocation of STAT6. May be involved in development of allergic airway inflammation (asthma), a process dependent on Th2 immune response. In the NF-kappa-B-mediated inflammatory response, can relieve SETD6-dependent repression of NF-kappa-B target genes by phosphorylating the RELA subunit at 'Ser-311'. Phosphorylates VAMP2 in vitro. Phosphorylates and activates LRRK1, which phosphorylates RAB proteins involved in intracellular trafficking. Its function is as follows. Involved in late synaptic long term potention phase in CA1 hippocampal cells and long term memory maintenance. In Homo sapiens (Human), this protein is Protein kinase C zeta type (PRKCZ).